The sequence spans 543 residues: Chaperonin GroEL (543 aa).

Residues 29–32 (TLGP), 86–90 (DGTTT), G413, 477–479 (DAL), and D493 contribute to the ATP site. The tract at residues 524 to 543 (EKDKPEMPGGAPGMGMGGMY) is disordered. A compositionally biased stretch (gly residues) spans 533–543 (GAPGMGMGGMY).

It belongs to the chaperonin (HSP60) family. In terms of assembly, forms a cylinder of 14 subunits composed of two heptameric rings stacked back-to-back. Interacts with the co-chaperonin GroES.

The protein resides in the cytoplasm. The enzyme catalyses ATP + H2O + a folded polypeptide = ADP + phosphate + an unfolded polypeptide.. Functionally, together with its co-chaperonin GroES, plays an essential role in assisting protein folding. The GroEL-GroES system forms a nano-cage that allows encapsulation of the non-native substrate proteins and provides a physical environment optimized to promote and accelerate protein folding. The chain is Chaperonin GroEL from Clostridium acetobutylicum (strain ATCC 824 / DSM 792 / JCM 1419 / IAM 19013 / LMG 5710 / NBRC 13948 / NRRL B-527 / VKM B-1787 / 2291 / W).